The primary structure comprises 283 residues: Bifunctional protein FolD (283 aa).

NADP(+) is bound by residues 165–167 (GRS) and Ser-190.

This sequence belongs to the tetrahydrofolate dehydrogenase/cyclohydrolase family. As to quaternary structure, homodimer.

It catalyses the reaction (6R)-5,10-methylene-5,6,7,8-tetrahydrofolate + NADP(+) = (6R)-5,10-methenyltetrahydrofolate + NADPH. It carries out the reaction (6R)-5,10-methenyltetrahydrofolate + H2O = (6R)-10-formyltetrahydrofolate + H(+). It participates in one-carbon metabolism; tetrahydrofolate interconversion. In terms of biological role, catalyzes the oxidation of 5,10-methylenetetrahydrofolate to 5,10-methenyltetrahydrofolate and then the hydrolysis of 5,10-methenyltetrahydrofolate to 10-formyltetrahydrofolate. The sequence is that of Bifunctional protein FolD from Variovorax paradoxus (strain S110).